The sequence spans 177 residues: Bifunctional protein PyrR (177 aa).

The short motif at 99–111 (VILVDDVIYKGRT) is the PRPP-binding element.

The protein belongs to the purine/pyrimidine phosphoribosyltransferase family. PyrR subfamily.

It carries out the reaction UMP + diphosphate = 5-phospho-alpha-D-ribose 1-diphosphate + uracil. Regulates the transcription of the pyrimidine nucleotide (pyr) operon in response to exogenous pyrimidines. Functionally, also displays a weak uracil phosphoribosyltransferase activity which is not physiologically significant. In Microcystis aeruginosa (strain NIES-843 / IAM M-2473), this protein is Bifunctional protein PyrR.